The sequence spans 512 residues: Bifunctional purine biosynthesis protein PurH (512 aa).

The MGS-like domain maps to 1–144 (MKRALVSVSD…KNYRDVVVVV (144 aa)).

The protein belongs to the PurH family.

It catalyses the reaction (6R)-10-formyltetrahydrofolate + 5-amino-1-(5-phospho-beta-D-ribosyl)imidazole-4-carboxamide = 5-formamido-1-(5-phospho-D-ribosyl)imidazole-4-carboxamide + (6S)-5,6,7,8-tetrahydrofolate. The enzyme catalyses IMP + H2O = 5-formamido-1-(5-phospho-D-ribosyl)imidazole-4-carboxamide. Its pathway is purine metabolism; IMP biosynthesis via de novo pathway; 5-formamido-1-(5-phospho-D-ribosyl)imidazole-4-carboxamide from 5-amino-1-(5-phospho-D-ribosyl)imidazole-4-carboxamide (10-formyl THF route): step 1/1. It participates in purine metabolism; IMP biosynthesis via de novo pathway; IMP from 5-formamido-1-(5-phospho-D-ribosyl)imidazole-4-carboxamide: step 1/1. The polypeptide is Bifunctional purine biosynthesis protein PurH (Ligilactobacillus salivarius (strain UCC118) (Lactobacillus salivarius)).